Consider the following 536-residue polypeptide: Aminopeptidase (536 aa).

An N-terminal signal peptide occupies residues 1–24; it reads MSNKNNLRYALGALALSVSAASLA. A PA domain is found at 152-255; the sequence is AGDVTAKVVP…ATYDNGVAWS (104 aa). A Phosphothreonine modification is found at T196. Residues H296 and D308 each contribute to the Zn(2+) site. The active-site Proton acceptor is E340. Residues E341, D369, and H467 each coordinate Zn(2+). A disulfide bridge connects residues C465 and C470.

The protein belongs to the peptidase M28 family. M28A subfamily. Requires Zn(2+) as cofactor.

The protein resides in the secreted. It carries out the reaction Release of an N-terminal amino acid, Xaa-|-Yaa-, in which Xaa is preferably Leu, but may be other amino acids including Pro although not Arg or Lys, and Yaa may be Pro. Amino acid amides and methyl esters are also readily hydrolyzed, but rates on arylamides are exceedingly low.. In terms of biological role, a secreted aminopeptidase. Acts on free N-terminal amino groups with a very strong preference for Leu in the first position. This chain is Aminopeptidase, found in Pseudomonas aeruginosa (strain UCBPP-PA14).